We begin with the raw amino-acid sequence, 367 residues long: Isocitrate dehydrogenase [NAD] regulatory subunit 1, mitochondrial (367 aa).

A mitochondrion-targeting transit peptide spans M1 to S25.

It belongs to the isocitrate and isopropylmalate dehydrogenases family. Heterooligomer of catalytic and regulatory subunits. As to expression, ubiquitous. Predominantly expressed in roots, stems and leaves.

It is found in the mitochondrion. Performs an essential role in the oxidative function of the citric acid cycle. The chain is Isocitrate dehydrogenase [NAD] regulatory subunit 1, mitochondrial (IDH1) from Arabidopsis thaliana (Mouse-ear cress).